We begin with the raw amino-acid sequence, 576 residues long: Formate--tetrahydrofolate ligase 2 (576 aa).

ATP is bound at residue 69 to 76 (TPLGEGKT).

The protein belongs to the formate--tetrahydrofolate ligase family.

The catalysed reaction is (6S)-5,6,7,8-tetrahydrofolate + formate + ATP = (6R)-10-formyltetrahydrofolate + ADP + phosphate. It participates in one-carbon metabolism; tetrahydrofolate interconversion. The polypeptide is Formate--tetrahydrofolate ligase 2 (Rubrobacter xylanophilus (strain DSM 9941 / JCM 11954 / NBRC 16129 / PRD-1)).